The following is a 1000-amino-acid chain: DENN domain-containing protein 2A (1000 aa).

Disordered regions lie at residues 1–155, 174–328, 427–464, and 491–525; these read MLEA…LRFQ, DGSA…RKSY, KLLDTRKLSRDGAGSPLRTSPPSTPSSPDDTFFNLGDL, and KRVKRLSQSTESNSGKVTDENSESDSDTEEKLKAH. Polar residues predominate over residues 34–43; that stretch reads QLNSVPNSGP. Composition is skewed to basic and acidic residues over residues 56-70, 79-117, 140-155, and 221-237; these read IKDKISKWEGKKEPP, DGQEDHLPSCKVERRGSELTRTKNGMRLETERLQNDSRA, SQHRGRELKPSDLRFQ, and HLEVREPGPEISEDWKG. Composition is skewed to pro residues over residues 249-258 and 288-307; these read PPKPFINPVP and PPLPSLPPPPPPLPSSPPPT. Basic and acidic residues predominate over residues 427–436; sequence KLLDTRKLSR. The segment covering 496–506 has biased composition (polar residues); sequence LSQSTESNSGK. Residue Ser544 is modified to Phosphoserine. The region spanning 559–708 is the uDENN domain; it reads EYFVVVSLHK…PFPALGKTII (150 aa). Positions 730-863 constitute a cDENN domain; it reads RLEHVDFESL…LQVALEHILE (134 aa). A dDENN domain is found at 865 to 960; that stretch reads RNDLACDQDG…QERELRRQDA (96 aa).

It localises to the cytoplasm. Its subcellular location is the cytoskeleton. Guanine nucleotide exchange factor (GEF) which may activate RAB9A and RAB9B. Promotes the exchange of GDP to GTP, converting inactive GDP-bound Rab proteins into their active GTP-bound form. May play a role in late endosomes back to trans-Golgi network/TGN transport. In Mus musculus (Mouse), this protein is DENN domain-containing protein 2A (Dennd2a).